The following is a 523-amino-acid chain: Protein nucleotidyltransferase YdiU (523 aa).

ATP-binding residues include Gly101, Gly103, Arg104, Lys128, Asp140, Gly141, Arg198, and Arg205. Asp275 serves as the catalytic Proton acceptor. Positions 276 and 285 each coordinate Mg(2+). Asp285 contributes to the ATP binding site.

Belongs to the SELO family. Mg(2+) is required as a cofactor. The cofactor is Mn(2+).

The catalysed reaction is L-seryl-[protein] + ATP = 3-O-(5'-adenylyl)-L-seryl-[protein] + diphosphate. It carries out the reaction L-threonyl-[protein] + ATP = 3-O-(5'-adenylyl)-L-threonyl-[protein] + diphosphate. It catalyses the reaction L-tyrosyl-[protein] + ATP = O-(5'-adenylyl)-L-tyrosyl-[protein] + diphosphate. The enzyme catalyses L-histidyl-[protein] + UTP = N(tele)-(5'-uridylyl)-L-histidyl-[protein] + diphosphate. The catalysed reaction is L-seryl-[protein] + UTP = O-(5'-uridylyl)-L-seryl-[protein] + diphosphate. It carries out the reaction L-tyrosyl-[protein] + UTP = O-(5'-uridylyl)-L-tyrosyl-[protein] + diphosphate. Functionally, nucleotidyltransferase involved in the post-translational modification of proteins. It can catalyze the addition of adenosine monophosphate (AMP) or uridine monophosphate (UMP) to a protein, resulting in modifications known as AMPylation and UMPylation. The sequence is that of Protein nucleotidyltransferase YdiU from Aromatoleum aromaticum (strain DSM 19018 / LMG 30748 / EbN1) (Azoarcus sp. (strain EbN1)).